Consider the following 473-residue polypeptide: MNKKLKYLSKSIKESFDINEINKIAKDSKFIQRKGSITAKDFLMFNVFYGSDICTAPLSQLAAKYDMIFSKQLPKQALDKRFNKYSVEFMKEIFIKFLYSQNNTLTNLERTLRTYFDRVIINDSISFTLPKEFKKKFPGSGGVASPSSIKVQLQYELLTGSFMNIDIFSGIKNDVEYLKTMKKYKDYKDLKLADLGYFKIDYLKRLDKSGTAFISKVKSNTSLYIKNPSPEKYKVGTIKKSSEYIKIDIIKLAEPLAAGETIELTDIYIGSKKELKSRLIITKLTEENKSKRIFNHIEGIKKKRLTLNQRRLDFNSINAYITNVSSNIITMNQVHELYSLRWQIEIIFKVWKSIFKINQVKKVKLERFMCFLYGRLIALLLSSTIVFTSKSIILEVDEKEISELKAFGNLIQYFPKLSFEIFKGEFYISRILKSVLSNFKRFGIKSKKNYKKTAFNILKLIKLESFEVTRFAI.

This sequence belongs to the transposase 11 family.

In terms of biological role, involved in the transposition of the insertion sequence. In Clostridium perfringens, this protein is Transposase for insertion sequence element IS1151 (tnp).